We begin with the raw amino-acid sequence, 350 residues long: Protein RecA (350 aa).

65–72 serves as a coordination point for ATP; the sequence is GPESSGKT. The interval 326-350 is disordered; sequence HNLKTRNTADSKVTGAKDEKSKEEK. Residues 340–350 are compositionally biased toward basic and acidic residues; sequence GAKDEKSKEEK.

This sequence belongs to the RecA family.

Its subcellular location is the cytoplasm. Functionally, can catalyze the hydrolysis of ATP in the presence of single-stranded DNA, the ATP-dependent uptake of single-stranded DNA by duplex DNA, and the ATP-dependent hybridization of homologous single-stranded DNAs. It interacts with LexA causing its activation and leading to its autocatalytic cleavage. The protein is Protein RecA of Clostridium novyi (strain NT).